The primary structure comprises 37 residues: MKIFRDILTNAEVVXDNDKPMDVLDEIVYAXQGRYIE.

The TCTP domain occupies 1 to 37 (MKIFRDILTNAEVVXDNDKPMDVLDEIVYAXQGRYIE).

Belongs to the TCTP family. As to quaternary structure, monomer.

It is found in the cytoplasm. Its function is as follows. Binds calcium; exact function not known. This chain is Translationally-controlled tumor protein homolog, found in Trypanosoma brucei brucei.